The sequence spans 922 residues: Probable outer membrane protein pmp1 (922 aa).

The first 26 residues, 1-26, serve as a signal peptide directing secretion; sequence MRFSLCGFPLVFSFTLLSVFDTSLSA. The 303-residue stretch at 620 to 922 folds into the Autotransporter domain; it reads SLQTDRGLWI…NINCGSKFRF (303 aa).

Belongs to the PMP outer membrane protein family.

It localises to the secreted. The protein resides in the cell wall. It is found in the cell outer membrane. This chain is Probable outer membrane protein pmp1 (pmp1), found in Chlamydia pneumoniae (Chlamydophila pneumoniae).